A 92-amino-acid polypeptide reads, in one-letter code: Large ribosomal subunit protein bL28 (92 aa).

Belongs to the bacterial ribosomal protein bL28 family.

This Borreliella afzelii (strain PKo) (Borrelia afzelii) protein is Large ribosomal subunit protein bL28.